We begin with the raw amino-acid sequence, 482 residues long: Replication factor C large subunit (482 aa).

46–53 (GPPGSGKT) serves as a coordination point for ATP. A disordered region spans residues 420 to 482 (EKETPKKKKK…KKQATLDSFF (63 aa)). Residues 442-476 (KISEPPKEPLKEVIEETVEKTDKKEKEKKDPKKQA) are compositionally biased toward basic and acidic residues.

It belongs to the activator 1 small subunits family. RfcL subfamily. Heteromultimer composed of small subunits (RfcS) and large subunits (RfcL).

Its function is as follows. Part of the RFC clamp loader complex which loads the PCNA sliding clamp onto DNA. The sequence is that of Replication factor C large subunit from Methanococcus maripaludis (strain C7 / ATCC BAA-1331).